A 403-amino-acid chain; its full sequence is Metacaspase-1 (403 aa).

The disordered stretch occupies residues 1–95 (MFPGSGHNTY…PSGSQSFGQN (95 aa)). Positions 13 to 22 (YPPPQGPPPN) are enriched in pro residues. Composition is skewed to low complexity over residues 23 to 34 (NNGYNSGPNNSY) and 49 to 62 (QYDQ…QSQP). Active-site residues include histidine 193 and cysteine 249.

It belongs to the peptidase C14B family.

Its function is as follows. Involved in cell death (apoptosis). The protein is Metacaspase-1 (MCA1) of Scheffersomyces stipitis (strain ATCC 58785 / CBS 6054 / NBRC 10063 / NRRL Y-11545) (Yeast).